A 345-amino-acid chain; its full sequence is Holliday junction branch migration complex subunit RuvB (345 aa).

Residues 1 to 183 (MTTQRLVSAA…FGIVHRLEFY (183 aa)) are large ATPase domain (RuvB-L). Residues Ile22, Arg23, Gly64, Lys67, Thr68, Thr69, 130 to 132 (EDY), Arg173, Tyr183, and Arg220 contribute to the ATP site. Thr68 is a Mg(2+) binding site. Positions 184 to 254 (SVEELSRIVA…VAGKALEMLD (71 aa)) are small ATPAse domain (RuvB-S). The head domain (RuvB-H) stretch occupies residues 257–345 (PNGFDQSDRR…NVNEELFGDE (89 aa)). 3 residues coordinate DNA: Arg293, Arg312, and Arg317.

The protein belongs to the RuvB family. As to quaternary structure, homohexamer. Forms an RuvA(8)-RuvB(12)-Holliday junction (HJ) complex. HJ DNA is sandwiched between 2 RuvA tetramers; dsDNA enters through RuvA and exits via RuvB. An RuvB hexamer assembles on each DNA strand where it exits the tetramer. Each RuvB hexamer is contacted by two RuvA subunits (via domain III) on 2 adjacent RuvB subunits; this complex drives branch migration. In the full resolvosome a probable DNA-RuvA(4)-RuvB(12)-RuvC(2) complex forms which resolves the HJ.

The protein resides in the cytoplasm. The catalysed reaction is ATP + H2O = ADP + phosphate + H(+). Functionally, the RuvA-RuvB-RuvC complex processes Holliday junction (HJ) DNA during genetic recombination and DNA repair, while the RuvA-RuvB complex plays an important role in the rescue of blocked DNA replication forks via replication fork reversal (RFR). RuvA specifically binds to HJ cruciform DNA, conferring on it an open structure. The RuvB hexamer acts as an ATP-dependent pump, pulling dsDNA into and through the RuvAB complex. RuvB forms 2 homohexamers on either side of HJ DNA bound by 1 or 2 RuvA tetramers; 4 subunits per hexamer contact DNA at a time. Coordinated motions by a converter formed by DNA-disengaged RuvB subunits stimulates ATP hydrolysis and nucleotide exchange. Immobilization of the converter enables RuvB to convert the ATP-contained energy into a lever motion, pulling 2 nucleotides of DNA out of the RuvA tetramer per ATP hydrolyzed, thus driving DNA branch migration. The RuvB motors rotate together with the DNA substrate, which together with the progressing nucleotide cycle form the mechanistic basis for DNA recombination by continuous HJ branch migration. Branch migration allows RuvC to scan DNA until it finds its consensus sequence, where it cleaves and resolves cruciform DNA. The chain is Holliday junction branch migration complex subunit RuvB from Methylococcus capsulatus (strain ATCC 33009 / NCIMB 11132 / Bath).